The chain runs to 593 residues: Inactive metallocarboxypeptidase ECM14 (593 aa).

A signal peptide spans 1-22; the sequence is MHFSVRLSLLLTLASSLPLVSA. A propeptide spanning residues 23–184 is cleaved from the precursor; sequence IPQHEDQAYT…QTIYESYPKT (162 aa). Positions 180–210 are disordered; sequence SYPKTNPSSPSQQGPTTRRFSPSASTSKTKP. The segment covering 182–210 has biased composition (polar residues); the sequence is PKTNPSSPSQQGPTTRRFSPSASTSKTKP. In terms of domain architecture, Peptidase M14 spans 220–546; sequence DYQPLSVLLP…RAMVAMGKFL (327 aa). The Zn(2+) site is built by His285 and Glu288. Substrate contacts are provided by residues 285-288, Arg343, and 360-361; these read HARE and DH. A disulfide bridge links Cys354 with Cys377. The N-linked (GlcNAc...) asparagine glycan is linked to Asn370. His417 contributes to the Zn(2+) binding site. A substrate-binding site is contributed by 418–419; sequence SY. Positions 557-593 are disordered; it reads NGPHAAEETQNYDDDFEEDEAEEDSDVFRAQGDDMSS. A compositionally biased stretch (acidic residues) spans 566-581; it reads QNYDDDFEEDEAEEDS.

The protein belongs to the peptidase M14 family. Zn(2+) is required as a cofactor.

The protein localises to the vacuole. It localises to the secreted. Functionally, inactive carboxypeptidase that may play a role in cell wall organization and biogenesis. This Arthroderma gypseum (strain ATCC MYA-4604 / CBS 118893) (Microsporum gypseum) protein is Inactive metallocarboxypeptidase ECM14 (ECM14).